The primary structure comprises 860 residues: MSDTKSGDDKTLSVTPMKTLTLKRPGMEQGTVRQNFSHGRTKSVVVETKKRKFSLPGDKPEPAAAAPVPVFTPKPPVAAAPVVQEAPKAAPPPPPRAPVERSGMVLNELSRSEMEARRRALEGSKVREVEDRQRAAEEAKRRAEDEERRKREREESARRQAEEEARLQAEAESRRRAEEEARRRAPLAAELATADEEEEVKPKRAGAGAPVRRLVTPEVARPAKPTKGEEDRRRGKLTLNSALSDEDARARSLSSMRRRQEKFKRAMHNEPREKVMREVILPETITIQELAQRMSERAVDVVKFFMKQGQILKPGDVIDADTAELVATEFGHTVRRVAESDIEEGLFNIADNAEDLVPRPPVVTIMGHVDHGKTSLLDAIRNANVVSGEAGGITQHIGAYQVEKNGQKITFIDTPGHAAFTAMRARGAQATDIAILVVAADDSVMPQTIESISHAKAAGVPIIVAINKIDKHDADPQKVRSELLRHEVFVESMGGEVLDVEVSATKGTNLDKLLEAILLQAEILDLKANPDRTAEGVVIEAQLDKGRGPVATVLVQTGTLMPGDILVAGNEWGRVRALVNDRGEQIKEAPPAMPVEVLGLQGTPLAGDRFAVVNNEARAREITEYRQRLAREKAVAKHAGQRGSLEQMMSQLQTSGLKEFPLVIKGDVQGSIEAINAALDKLGTDEVRARIVHAGAGAITESDVSLAETSGAAIIGFNVRANVQARAAAAAAGIEIRYYSIIYNLVDDVKAALSGLLSPERRETFIGNAEILEIFDITKVGKIAGCRVTEGKVERGAGVRLIRDNVVIHEGTLKTLKRFKDEVSEVPGGQECGMAFQNYEDMRVGDIIECFRVEMVTRTL.

A compositionally biased stretch (basic and acidic residues) spans 1–11 (MSDTKSGDDKT). The interval 1–265 (MSDTKSGDDK…MRRRQEKFKR (265 aa)) is disordered. Positions 79–88 (AAPVVQEAPK) are enriched in low complexity. Residues 110–183 (SRSEMEARRR…RRRAEEEARR (74 aa)) show a composition bias toward basic and acidic residues. The tr-type G domain maps to 358–525 (PRPPVVTIMG…AILLQAEILD (168 aa)). Residues 367–374 (GHVDHGKT) are G1. 367-374 (GHVDHGKT) contributes to the GTP binding site. Residues 392–396 (GITQH) are G2. Residues 413 to 416 (DTPG) are G3. Residues 413–417 (DTPGH) and 467–470 (NKID) contribute to the GTP site. Positions 467–470 (NKID) are G4. Positions 503–505 (SAT) are G5.

Belongs to the TRAFAC class translation factor GTPase superfamily. Classic translation factor GTPase family. IF-2 subfamily.

It is found in the cytoplasm. One of the essential components for the initiation of protein synthesis. Protects formylmethionyl-tRNA from spontaneous hydrolysis and promotes its binding to the 30S ribosomal subunits. Also involved in the hydrolysis of GTP during the formation of the 70S ribosomal complex. The sequence is that of Translation initiation factor IF-2 from Mesorhizobium japonicum (strain LMG 29417 / CECT 9101 / MAFF 303099) (Mesorhizobium loti (strain MAFF 303099)).